Consider the following 216-residue polypeptide: ATP-dependent Clp protease proteolytic subunit 1 (216 aa).

Catalysis depends on S119, which acts as the Nucleophile. The active site involves H144.

The protein belongs to the peptidase S14 family. Fourteen ClpP subunits assemble into 2 heptameric rings which stack back to back to give a disk-like structure with a central cavity, resembling the structure of eukaryotic proteasomes.

The protein localises to the cytoplasm. It catalyses the reaction Hydrolysis of proteins to small peptides in the presence of ATP and magnesium. alpha-casein is the usual test substrate. In the absence of ATP, only oligopeptides shorter than five residues are hydrolyzed (such as succinyl-Leu-Tyr-|-NHMec, and Leu-Tyr-Leu-|-Tyr-Trp, in which cleavage of the -Tyr-|-Leu- and -Tyr-|-Trp bonds also occurs).. Cleaves peptides in various proteins in a process that requires ATP hydrolysis. Has a chymotrypsin-like activity. Plays a major role in the degradation of misfolded proteins. The chain is ATP-dependent Clp protease proteolytic subunit 1 from Cutibacterium acnes (strain DSM 16379 / KPA171202) (Propionibacterium acnes).